We begin with the raw amino-acid sequence, 1030 residues long: Peroxisomal ATPase PEX6 (1030 aa).

The tract at residues 478-683 is AAA-cassette D1; that stretch reads VLLHSTTNNV…VETARMTATA (206 aa). Residues 767-956 form an AAA-cassette D2 region; that stretch reads GILFYGPPGT…CSDAMLNAMS (190 aa). Position 772–779 (772–779) interacts with ATP; sequence GPPGTGKT.

The protein belongs to the AAA ATPase family. Interacts with PEX1; forming the PEX1-PEX6 AAA ATPase complex, which is composed of a heterohexamer formed by a trimer of PEX1-PEX6 dimers. Interacts with PEX15; anchors PEX1-PEX6 heterooligomers to the peroxisomal membrane and mediates their association with the peroxisomal importomer. Interacts with UBP15.

The protein resides in the cytoplasm. The protein localises to the cytosol. It is found in the peroxisome membrane. It carries out the reaction ATP + H2O = ADP + phosphate + H(+). Its function is as follows. Component of the PEX1-PEX6 AAA ATPase complex, a protein dislocase complex that mediates the ATP-dependent extraction of the PEX5 receptor from peroxisomal membranes, an essential step for PEX5 recycling. Specifically recognizes PEX5 monoubiquitinated at 'Cys-6', and pulls it out of the peroxisome lumen through the PEX2-PEX10-PEX12 retrotranslocation channel. Extraction by the PEX1-PEX6 AAA ATPase complex is accompanied by unfolding of the TPR repeats and release of bound cargo from PEX5. The polypeptide is Peroxisomal ATPase PEX6 (Saccharomyces cerevisiae (strain ATCC 204508 / S288c) (Baker's yeast)).